The sequence spans 514 residues: Maltose/maltodextrin transport system permease protein MalF (514 aa).

Residues 1–16 (MDVIKKKHWWQSDALK) are Cytoplasmic-facing. A helical membrane pass occupies residues 17 to 36 (WSVLGLLGLLVGYLVVLMYA). At 37-39 (QGE) the chain is on the periplasmic side. A helical transmembrane segment spans residues 40–58 (YLFAITTLILSSAGLYIFA). Over 59–66 (NRKAYAWR) the chain is Cytoplasmic. Residues 67-92 (YVYPGMAGMGLFVLFPLVCTIAIAFT) form a helical membrane-spanning segment. Residues 93–275 (NYSSTNQLTF…RVFTDEGIQK (183 aa)) lie on the Periplasmic side of the membrane. The chain crosses the membrane as a helical span at residues 276–306 (PFLAIFVWTVVFSLITVFLTVAVGMVLACLV). The ABC transmembrane type-1 domain occupies 281-505 (FVWTVVFSLI…LLVGALAIVN (225 aa)). Over 307-318 (QWEALRGKAVYR) the chain is Cytoplasmic. A helical membrane pass occupies residues 319-336 (VLLILPYAVPSFISILIF). At 337–369 (KGLFNQSFGEINMMLSALFGVKPAWFSDPTTAR) the chain is on the periplasmic side. The helical transmembrane segment at 370-392 (TMLIIVNTWLGYPYMMILCMGLL) threads the bilayer. The Cytoplasmic portion of the chain corresponds to 393–425 (KAIPDDLYEASAMDGAGPFQNFFKITLPLLIKP). Residues 426–452 (LTPLMIASFAFNFNNFVLIQLLTNGGP) form a helical membrane-spanning segment. Residues 453 to 483 (DRLGTTTPAGYTDLLVNYTYRIAFEGGGGQD) are Periplasmic-facing. A helical membrane pass occupies residues 484–505 (FGLAAAIATLIFLLVGALAIVN). Residues 506–514 (LKATRMKFD) are Cytoplasmic-facing.

The protein belongs to the binding-protein-dependent transport system permease family. MalFG subfamily. As to quaternary structure, the complex is composed of two ATP-binding proteins (MalK), two transmembrane proteins (MalG and MalF) and a solute-binding protein (MalE). Protein stability and stable complex formation require YidC.

It localises to the cell inner membrane. Its function is as follows. Part of the ABC transporter complex MalEFGK involved in maltose/maltodextrin import. Probably responsible for the translocation of the substrate across the membrane. The sequence is that of Maltose/maltodextrin transport system permease protein MalF from Escherichia coli (strain K12).